Reading from the N-terminus, the 194-residue chain is Large ribosomal subunit protein eL15 (194 aa).

The interval 158–194 (ANRGLTSAGKKGRGLMYKGKGAEKARPGVRANGKKTK) is disordered.

It belongs to the eukaryotic ribosomal protein eL15 family.

This is Large ribosomal subunit protein eL15 from Methanococcus maripaludis (strain DSM 14266 / JCM 13030 / NBRC 101832 / S2 / LL).